Consider the following 466-residue polypeptide: Small RNA degrading nuclease 2 (466 aa).

In terms of domain architecture, Exonuclease spans 142 to 298 (MIAIDCEMVL…HDAEAAMKLV (157 aa)). The interval 426–466 (EENNASSKKRKRENHSKGTRDRRRCKPLSRRKQRSNVKRRR) is disordered. Over residues 445–466 (RDRRRCKPLSRRKQRSNVKRRR) the composition is skewed to basic residues.

This sequence belongs to the REXO1/REXO3 family.

Its subcellular location is the nucleus. Functionally, 3'-5' exonuclease degrading single-stranded small RNAs. This is Small RNA degrading nuclease 2 (SDN2) from Arabidopsis thaliana (Mouse-ear cress).